The primary structure comprises 277 residues: MSTSRQQQGRHQGHIARKRFGQNFLVDMGVIDSIVDVIRPQRGERMVEIGPGLGALTEPLIERLATPEAPLHAVELDRDLIGRLKTKFGDLLELHAGDALAFDFGSLAAPGDKASLRIVGNLPYNISSPLLFHLTAFAHCVIDQHFMLQNEVVERMVAEPGTKAFSRLSVMLQYRYVIDKQLDVPPEAFNPPPKVDSAIVRMIPYELHELPPVDERVLGELVTAAFSQRRKMLRNTLAAYRDSVDFEGLGFDLQRRAEDVPVAEYVRVAQIVAASKA.

Residues N23, L25, G50, E75, D98, and N121 each contribute to the S-adenosyl-L-methionine site.

It belongs to the class I-like SAM-binding methyltransferase superfamily. rRNA adenine N(6)-methyltransferase family. RsmA subfamily.

The protein localises to the cytoplasm. It carries out the reaction adenosine(1518)/adenosine(1519) in 16S rRNA + 4 S-adenosyl-L-methionine = N(6)-dimethyladenosine(1518)/N(6)-dimethyladenosine(1519) in 16S rRNA + 4 S-adenosyl-L-homocysteine + 4 H(+). Functionally, specifically dimethylates two adjacent adenosines (A1518 and A1519) in the loop of a conserved hairpin near the 3'-end of 16S rRNA in the 30S particle. May play a critical role in biogenesis of 30S subunits. This chain is Ribosomal RNA small subunit methyltransferase A, found in Paraburkholderia xenovorans (strain LB400).